The following is an 88-amino-acid chain: UPF0367 protein AM1_1885 (88 aa).

Belongs to the UPF0367 family.

The protein is UPF0367 protein AM1_1885 of Acaryochloris marina (strain MBIC 11017).